Reading from the N-terminus, the 160-residue chain is Cyclic pyranopterin monophosphate synthase (160 aa).

Substrate-binding positions include 76-78 (LCH) and 114-115 (ME). Asp-129 is an active-site residue.

Belongs to the MoaC family. Homohexamer; trimer of dimers.

The catalysed reaction is (8S)-3',8-cyclo-7,8-dihydroguanosine 5'-triphosphate = cyclic pyranopterin phosphate + diphosphate. It participates in cofactor biosynthesis; molybdopterin biosynthesis. In terms of biological role, catalyzes the conversion of (8S)-3',8-cyclo-7,8-dihydroguanosine 5'-triphosphate to cyclic pyranopterin monophosphate (cPMP). This Mesorhizobium japonicum (strain LMG 29417 / CECT 9101 / MAFF 303099) (Mesorhizobium loti (strain MAFF 303099)) protein is Cyclic pyranopterin monophosphate synthase.